Here is a 374-residue protein sequence, read N- to C-terminus: Alanine racemase (374 aa).

K35 functions as the Proton acceptor; specific for D-alanine in the catalytic mechanism. Residue K35 is modified to N6-(pyridoxal phosphate)lysine. R130 serves as a coordination point for substrate. Y253 functions as the Proton acceptor; specific for L-alanine in the catalytic mechanism. M305 is a binding site for substrate.

This sequence belongs to the alanine racemase family. The cofactor is pyridoxal 5'-phosphate.

It catalyses the reaction L-alanine = D-alanine. The protein operates within amino-acid biosynthesis; D-alanine biosynthesis; D-alanine from L-alanine: step 1/1. Catalyzes the interconversion of L-alanine and D-alanine. May also act on other amino acids. The polypeptide is Alanine racemase (alr) (Ralstonia pickettii (strain 12J)).